Reading from the N-terminus, the 304-residue chain is uncharacterized protein (304 aa).

Coiled coils occupy residues 3-35 (KNQYISQNMENKEIENKEIENKKTDSKEFDKEI) and 89-132 (KSNK…NSNL). Residues 96-121 (LQNKQQENSEEKNSEEKNSEEKNSEE) are disordered.

This is an uncharacterized protein from Acanthamoeba polyphaga (Amoeba).